Reading from the N-terminus, the 387-residue chain is GTPase Obg (387 aa).

Residues 1–159 (MKFVDEAVIR…RSLRLELMLL (159 aa)) form the Obg domain. The OBG-type G domain occupies 160–333 (ADVGLLGMPN…LALKLMDFID (174 aa)). GTP-binding positions include 166–173 (GMPNAGKS), 191–195 (FTTLV), 213–216 (DIPG), 283–286 (NKTD), and 314–316 (SAY). Positions 173 and 193 each coordinate Mg(2+).

Belongs to the TRAFAC class OBG-HflX-like GTPase superfamily. OBG GTPase family. In terms of assembly, monomer. The cofactor is Mg(2+).

Its subcellular location is the cytoplasm. In terms of biological role, an essential GTPase which binds GTP, GDP and possibly (p)ppGpp with moderate affinity, with high nucleotide exchange rates and a fairly low GTP hydrolysis rate. Plays a role in control of the cell cycle, stress response, ribosome biogenesis and in those bacteria that undergo differentiation, in morphogenesis control. In Shewanella loihica (strain ATCC BAA-1088 / PV-4), this protein is GTPase Obg.